A 140-amino-acid polypeptide reads, in one-letter code: Ribosomal RNA large subunit methyltransferase H (140 aa).

S-adenosyl-L-methionine contacts are provided by Leu-55 and Gly-87.

It belongs to the RNA methyltransferase RlmH family. As to quaternary structure, homodimer.

The protein localises to the cytoplasm. It catalyses the reaction pseudouridine(1915) in 23S rRNA + S-adenosyl-L-methionine = N(3)-methylpseudouridine(1915) in 23S rRNA + S-adenosyl-L-homocysteine + H(+). Its function is as follows. Specifically methylates the pseudouridine at position 1915 (m3Psi1915) in 23S rRNA. The sequence is that of Ribosomal RNA large subunit methyltransferase H from Erythrobacter litoralis (strain HTCC2594).